The primary structure comprises 760 residues: Elongation factor G, mitochondrial (760 aa).

A mitochondrion-targeting transit peptide spans 1 to 37 (MIRGMLPRGLRALRPSVSPTVVSSSLHRNFHSSIRRF). A tr-type G domain is found at 68 to 349 (SRLRNIGVSA…AVVDYLPQPN (282 aa)). GTP is bound by residues 77–84 (AHIDSGKT), 148–152 (DTPGH), and 202–205 (NKMD).

This sequence belongs to the TRAFAC class translation factor GTPase superfamily. Classic translation factor GTPase family. EF-G/EF-2 subfamily.

Its subcellular location is the mitochondrion. It participates in protein biosynthesis; polypeptide chain elongation. In terms of biological role, mitochondrial GTPase that catalyzes the GTP-dependent ribosomal translocation step during translation elongation. During this step, the ribosome changes from the pre-translocational (PRE) to the post-translocational (POST) state as the newly formed A-site-bound peptidyl-tRNA and P-site-bound deacylated tRNA move to the P and E sites, respectively. Catalyzes the coordinated movement of the two tRNA molecules, the mRNA and conformational changes in the ribosome. The polypeptide is Elongation factor G, mitochondrial (Meyerozyma guilliermondii (strain ATCC 6260 / CBS 566 / DSM 6381 / JCM 1539 / NBRC 10279 / NRRL Y-324) (Yeast)).